Here is a 279-residue protein sequence, read N- to C-terminus: Large ribosomal subunit protein uL2 (279 aa).

Residues 223–279 (PVAMNPVDHPMGGGEGRASGGHPRSRKGLPAKGFKTRSRTKASNKYIVERRKTRKKK) are disordered. The span at 245–264 (PRSRKGLPAKGFKTRSRTKA) shows a compositional bias: basic residues.

This sequence belongs to the universal ribosomal protein uL2 family. Part of the 50S ribosomal subunit. Forms a bridge to the 30S subunit in the 70S ribosome.

Functionally, one of the primary rRNA binding proteins. Required for association of the 30S and 50S subunits to form the 70S ribosome, for tRNA binding and peptide bond formation. It has been suggested to have peptidyltransferase activity; this is somewhat controversial. Makes several contacts with the 16S rRNA in the 70S ribosome. The protein is Large ribosomal subunit protein uL2 of Christiangramia forsetii (strain DSM 17595 / CGMCC 1.15422 / KT0803) (Gramella forsetii).